A 208-amino-acid polypeptide reads, in one-letter code: 3-demethoxyubiquinol 3-hydroxylase (208 aa).

Fe cation-binding residues include Glu57, Glu87, His90, Glu139, Glu171, and His174.

Belongs to the COQ7 family. Requires Fe cation as cofactor.

It localises to the cell membrane. It carries out the reaction a 5-methoxy-2-methyl-3-(all-trans-polyprenyl)benzene-1,4-diol + AH2 + O2 = a 3-demethylubiquinol + A + H2O. It functions in the pathway cofactor biosynthesis; ubiquinone biosynthesis. Catalyzes the hydroxylation of 2-nonaprenyl-3-methyl-6-methoxy-1,4-benzoquinol during ubiquinone biosynthesis. The sequence is that of 3-demethoxyubiquinol 3-hydroxylase from Burkholderia cenocepacia (strain ATCC BAA-245 / DSM 16553 / LMG 16656 / NCTC 13227 / J2315 / CF5610) (Burkholderia cepacia (strain J2315)).